The following is a 323-amino-acid chain: tRNA U34 carboxymethyltransferase (323 aa).

Residues K91, W105, K110, G130, 152-154 (DPT), 181-182 (IE), M196, Y200, and R315 contribute to the carboxy-S-adenosyl-L-methionine site.

Belongs to the class I-like SAM-binding methyltransferase superfamily. CmoB family. In terms of assembly, homotetramer.

The catalysed reaction is carboxy-S-adenosyl-L-methionine + 5-hydroxyuridine(34) in tRNA = 5-carboxymethoxyuridine(34) in tRNA + S-adenosyl-L-homocysteine + H(+). Functionally, catalyzes carboxymethyl transfer from carboxy-S-adenosyl-L-methionine (Cx-SAM) to 5-hydroxyuridine (ho5U) to form 5-carboxymethoxyuridine (cmo5U) at position 34 in tRNAs. This chain is tRNA U34 carboxymethyltransferase, found in Salmonella paratyphi B (strain ATCC BAA-1250 / SPB7).